The chain runs to 126 residues: Large-conductance mechanosensitive channel (126 aa).

The next 2 helical transmembrane spans lie at 14 to 34 and 67 to 87; these read VIDL…VKSL and GSFL…FILV.

The protein belongs to the MscL family. In terms of assembly, homopentamer.

It localises to the cell membrane. Channel that opens in response to stretch forces in the membrane lipid bilayer. May participate in the regulation of osmotic pressure changes within the cell. This is Large-conductance mechanosensitive channel from Lactiplantibacillus plantarum (strain ATCC BAA-793 / NCIMB 8826 / WCFS1) (Lactobacillus plantarum).